A 500-amino-acid chain; its full sequence is L-arabinose isomerase (500 aa).

Glu-306, Glu-333, His-350, and His-450 together coordinate Mn(2+).

Belongs to the arabinose isomerase family. Homohexamer. The cofactor is Mn(2+).

The enzyme catalyses beta-L-arabinopyranose = L-ribulose. Its pathway is carbohydrate degradation; L-arabinose degradation via L-ribulose; D-xylulose 5-phosphate from L-arabinose (bacterial route): step 1/3. Functionally, catalyzes the conversion of L-arabinose to L-ribulose. This chain is L-arabinose isomerase, found in Escherichia coli O139:H28 (strain E24377A / ETEC).